A 362-amino-acid chain; its full sequence is Myricetin 3'-O-methyltransferase 4 (362 aa).

Aspartate 229 provides a ligand contact to S-adenosyl-L-methionine. Histidine 267 functions as the Proton acceptor in the catalytic mechanism.

It belongs to the class I-like SAM-binding methyltransferase superfamily. Cation-independent O-methyltransferase family. In terms of assembly, homodimer. Mainly expressed in stem and petiole trichomes.

The catalysed reaction is myricetin + S-adenosyl-L-methionine = laricitrin + S-adenosyl-L-homocysteine + H(+). Its pathway is flavonoid metabolism. Its function is as follows. Flavonoid 3'-O-methyltransferase involved in the biosynthesis of polymethoxylated flavonoids natural products such as myricetin derivatives, aroma compounds possessing antioxidant properties and exhibiting pharmacological activities such as anti-carcinogen, anti-viral, anti-thrombotic, anti-diabetic, anti-atherosclerotic, and anti-inflammatory effects. Catalyzes S-adenosylmethionine-dependent regioselective 3'-O-methylation of flavonoids; active on various hydroxylated flavonoid substrates, including myricetin, thus producing 3'-methyl myricetin (laricitrin). This Solanum lycopersicum (Tomato) protein is Myricetin 3'-O-methyltransferase 4.